The sequence spans 40 residues: Photosystem II reaction center protein J (40 aa).

The helical transmembrane segment at 8-28 (IPLWVIGTVAGILVIGIIGIF) threads the bilayer.

Belongs to the PsbJ family. PSII is composed of 1 copy each of membrane proteins PsbA, PsbB, PsbC, PsbD, PsbE, PsbF, PsbH, PsbI, PsbJ, PsbK, PsbL, PsbM, PsbT, PsbX, PsbY, PsbZ, Psb30/Ycf12, at least 3 peripheral proteins of the oxygen-evolving complex and a large number of cofactors. It forms dimeric complexes.

The protein resides in the plastid. Its subcellular location is the chloroplast thylakoid membrane. Functionally, one of the components of the core complex of photosystem II (PSII). PSII is a light-driven water:plastoquinone oxidoreductase that uses light energy to abstract electrons from H(2)O, generating O(2) and a proton gradient subsequently used for ATP formation. It consists of a core antenna complex that captures photons, and an electron transfer chain that converts photonic excitation into a charge separation. In Lobularia maritima (Sweet alyssum), this protein is Photosystem II reaction center protein J.